Reading from the N-terminus, the 119-residue chain is Large ribosomal subunit protein bL20 (119 aa).

This sequence belongs to the bacterial ribosomal protein bL20 family.

Binds directly to 23S ribosomal RNA and is necessary for the in vitro assembly process of the 50S ribosomal subunit. It is not involved in the protein synthesizing functions of that subunit. The protein is Large ribosomal subunit protein bL20 of Clostridium acetobutylicum (strain ATCC 824 / DSM 792 / JCM 1419 / IAM 19013 / LMG 5710 / NBRC 13948 / NRRL B-527 / VKM B-1787 / 2291 / W).